The chain runs to 182 residues: Probable tyrosine phosphatase protein H4 (182 aa).

One can recognise a Tyrosine-protein phosphatase domain in the interval 1 to 182 (MEINKFICSQ…TVLKIQKSKI (182 aa)). Catalysis depends on Cys-142, which acts as the Phosphocysteine intermediate.

The protein belongs to the protein-tyrosine phosphatase family.

The catalysed reaction is O-phospho-L-tyrosyl-[protein] + H2O = L-tyrosyl-[protein] + phosphate. The chain is Probable tyrosine phosphatase protein H4 (H5) from Microplitis demolitor (Parasitoid wasp).